Here is a 327-residue protein sequence, read N- to C-terminus: Endochitinase CH5B (327 aa).

Positions 1-26 (MKKNRMMIMICSVGVVWMLLVGGSYG) are cleaved as a signal peptide. In terms of domain architecture, Chitin-binding type-1 spans 27–67 (EQCGRQAGGALCPGGNCCSQFGWCGSTTDYCGKDCQSQCGG). Disulfide bonds link cysteine 29–cysteine 44, cysteine 38–cysteine 50, cysteine 43–cysteine 57, cysteine 61–cysteine 65, cysteine 96–cysteine 158, cysteine 169–cysteine 177, and cysteine 276–cysteine 308. The Proton donor role is filled by glutamate 140. A propeptide spans 317-327 (SLFLSDLVTSQ) (removed in mature form).

It belongs to the glycosyl hydrolase 19 family. Chitinase class I subfamily.

The protein resides in the vacuole. It carries out the reaction Random endo-hydrolysis of N-acetyl-beta-D-glucosaminide (1-&gt;4)-beta-linkages in chitin and chitodextrins.. Functionally, defense against chitin-containing fungal pathogens. In Phaseolus vulgaris (Kidney bean), this protein is Endochitinase CH5B.